The following is a 390-amino-acid chain: Ribosomal RNA small subunit methyltransferase H (390 aa).

Residues 47 to 49 (GGH), Asp66, Phe93, Asp122, and Gln129 each bind S-adenosyl-L-methionine. Positions 282 to 390 (SKTPPGLPID…SHREDVEGEQ (109 aa)) are disordered. The segment covering 305-316 (GSEKADEQENNK) has biased composition (basic and acidic residues). A compositionally biased stretch (polar residues) spans 348–358 (SGSSTTYSARS). 2 stretches are compositionally biased toward basic and acidic residues: residues 360-372 (SRHEAHREGREHL) and 381-390 (SHREDVEGEQ).

The protein belongs to the methyltransferase superfamily. RsmH family.

It localises to the cytoplasm. The enzyme catalyses cytidine(1402) in 16S rRNA + S-adenosyl-L-methionine = N(4)-methylcytidine(1402) in 16S rRNA + S-adenosyl-L-homocysteine + H(+). In terms of biological role, specifically methylates the N4 position of cytidine in position 1402 (C1402) of 16S rRNA. This is Ribosomal RNA small subunit methyltransferase H from Corynebacterium kroppenstedtii (strain DSM 44385 / JCM 11950 / CIP 105744 / CCUG 35717).